Here is a 1214-residue protein sequence, read N- to C-terminus: Formin-D (1214 aa).

The GBD/FH3 domain maps to 10–379 (KKEESPQSID…KMNNGESYLD (370 aa)). Residues 401 to 448 (SGEKAVLIQKEIEDLKKQKKRDQDKLAEKDKLLTKLAKRMRKMEEAIK) adopt a coiled-coil conformation. An FH1 domain is found at 457–544 (NNQIEIESPP…GSGDGIPLPP (88 aa)). Polar residues-rich tracts occupy residues 462-479 (IESPPDSSTSTPQETTPG) and 518-534 (LDTTNQQGSTDASQTEA). Disordered stretches follow at residues 462–490 (IESPPDSSTSTPQETTPGGTKVPLKTSPV), 507–569 (APNG…SRPP), 868–948 (PKSV…PLKD), 1026–1045 (DKSTQRKNEKERKEMEIKKS), 1054–1089 (LKKIGSPSSSNRILASNESSPTSSTSSVVHQHDDED), and 1133–1214 (MNLQ…EGEN). The span at 541-554 (PLPPGAPPPPPPPG) shows a compositional bias: pro residues. The FH2 domain maps to 562–1037 (PQLCSRPPSI…STQRKNEKER (476 aa)). Basic and acidic residues predominate over residues 868–877 (PKSVEPKPDD). Polar residues predominate over residues 930-940 (QVNTNSTSDSK). The stretch at 1019–1056 (EIEKSIKDKSTQRKNEKERKEMEIKKSKLEMIHSKLKK) forms a coiled coil. The span at 1059–1071 (SPSSSNRILASNE) shows a compositional bias: polar residues. The region spanning 1065 to 1095 (RILASNESSPTSSTSSVVHQHDDEDEETIKE) is the DAD domain. Residues 1161–1171 (SSTYSSISSIY) show a composition bias toward low complexity. The segment covering 1174–1214 (EPLDMSDQEDEDEEEEEDEEEEEEEEEGDDDNDNDEEEGEN) has biased composition (acidic residues). The stretch at 1176–1207 (LDMSDQEDEDEEEEEDEEEEEEEEEGDDDNDN) forms a coiled coil.

The protein belongs to the formin homology family. Diaphanous subfamily. As to quaternary structure, interacts (via GBD/FH3 domain) with activated Rho-GTPases.

In terms of biological role, formins play an important role in the nucleation of actin and the formation of linear actin filaments. The chain is Formin-D (forD) from Dictyostelium discoideum (Social amoeba).